The chain runs to 337 residues: Outer membrane protein U (337 aa).

An N-terminal signal peptide occupies residues 1–21; sequence MKKTLIALSVSAAAMATGVNA.

This sequence belongs to the Gram-negative porin family. In terms of assembly, homotrimer.

The protein resides in the cell outer membrane. Its function is as follows. Forms pores that allow passive diffusion of small molecules across the outer membrane. The chain is Outer membrane protein U (ompU) from Vibrio parahaemolyticus serotype O3:K6 (strain RIMD 2210633).